The following is a 174-amino-acid chain: Shikimate kinase (174 aa).

14–19 is an ATP binding site; it reads GAGKST. A Mg(2+)-binding site is contributed by Ser18. The substrate site is built by Asp36, Arg60, and Gly82. Position 120 (Arg120) interacts with ATP. Position 141 (Arg141) interacts with substrate. Arg158 contacts ATP.

The protein belongs to the shikimate kinase family. As to quaternary structure, monomer. It depends on Mg(2+) as a cofactor.

Its subcellular location is the cytoplasm. It catalyses the reaction shikimate + ATP = 3-phosphoshikimate + ADP + H(+). It functions in the pathway metabolic intermediate biosynthesis; chorismate biosynthesis; chorismate from D-erythrose 4-phosphate and phosphoenolpyruvate: step 5/7. In terms of biological role, catalyzes the specific phosphorylation of the 3-hydroxyl group of shikimic acid using ATP as a cosubstrate. The sequence is that of Shikimate kinase from Buchnera aphidicola subsp. Baizongia pistaciae (strain Bp).